Reading from the N-terminus, the 318-residue chain is Lysophospholipase D GDPD3 (318 aa).

The Cytoplasmic segment spans residues 1-2; that stretch reads MS. The helical transmembrane segment at 3-23 threads the bilayer; sequence LLLYYALPALGSYAMLSIFFL. Residues 24 to 198 lie on the Extracellular side of the membrane; it reads RRPHLLHTPR…KAANPEMPLS (175 aa). The region spanning 39-308 is the GP-PDE domain; the sequence is IRLGAHRGGS…DYPTALRHYL (270 aa). Residues glutamate 71, aspartate 73, and histidine 86 each contribute to the a divalent metal cation site. A helical transmembrane segment spans residues 199-221; the sequence is FTISRGFWVLLSYYLGLLPFIPI. The Cytoplasmic portion of the chain corresponds to 222-318; that stretch reads PEKFFFCFLP…DNHGPAARTS (97 aa).

It belongs to the glycerophosphoryl diester phosphodiesterase family. As to expression, widely expressed, with high level in kidney and ovary.

The protein resides in the membrane. It localises to the cytoplasm. The protein localises to the perinuclear region. It is found in the endoplasmic reticulum. The catalysed reaction is 1-hexadecanoyl-sn-glycero-3-phosphocholine + H2O = 1-hexadecanoyl-sn-glycero-3-phosphate + choline + H(+). It carries out the reaction 1-hexadecanoyl-sn-glycero-3-phosphocholine + H2O = sn-glycerol 3-phosphocholine + hexadecanoate + H(+). The enzyme catalyses 1-O-(1Z-octadecenyl)-sn-glycero-3-phospho-N-hexadecanoyl-ethanolamine + H2O = 1-O-(1Z-octadecenyl)-sn-glycero-3-phosphate + N-hexadecanoylethanolamine + H(+). It catalyses the reaction N-(5Z,8Z,11Z,14Z-eicosatetraenoyl)-1-(9Z-octadecenoyl)-sn-glycero-3-phosphoethanolamine + H2O = N-(5Z,8Z,11Z,14Z-eicosatetraenoyl)-ethanolamine + 1-(9Z-octadecenoyl)-sn-glycero-3-phosphate + H(+). The catalysed reaction is N,1-di-(9Z-octadecenoyl)-sn-glycero-3-phosphoethanolamine + H2O = N-(9Z-octadecenoyl) ethanolamine + 1-(9Z-octadecenoyl)-sn-glycero-3-phosphate + H(+). It carries out the reaction N-hexadecanoyl-1-(9Z-octadecenoyl)-sn-glycero-3-phosphoethanolamine + H2O = N-hexadecanoylethanolamine + 1-(9Z-octadecenoyl)-sn-glycero-3-phosphate + H(+). The enzyme catalyses 1-O-hexadecyl-sn-glycero-3-phosphocholine + H2O = 1-O-hexadecyl-sn-glycero-3-phosphate + choline + H(+). With respect to regulation, lysophospholipase D activity is stimulated by calcium. Loss of lysophospholipase D activity in presence of EDTA. In terms of biological role, hydrolyzes lysoglycerophospholipids to produce lysophosphatidic acid (LPA) and the corresponding amines. Shows a preference for 1-O-alkyl-sn-glycero-3-phosphocholine (lyso-PAF), lysophosphatidylcholine (lyso-PC) and N-acylethanolamine lysophospholipids. Does not display glycerophosphodiester phosphodiesterase activity, since it cannot hydrolyze either glycerophosphoinositol or glycerophosphocholine. The sequence is that of Lysophospholipase D GDPD3 from Homo sapiens (Human).